Consider the following 669-residue polypeptide: Matrix metalloproteinase-15 (669 aa).

Residues 1-41 (MGSDPSAPGRPGWTGSLLGDREEAARPRLLPLLLVLLGCLG) constitute a signal peptide (or 45). A propeptide spanning residues 42 to 131 (LGVAAEDAEV…KANLRRRRKR (90 aa)) is cleaved from the precursor. The Cysteine switch signature appears at 109–116 (PRCGVPDQ). C111 is a Zn(2+) binding site. Over 132 to 625 (YALTGRKWNN…QMEEVARTVN (494 aa)) the chain is Extracellular. N150 carries an N-linked (GlcNAc...) asparagine glycan. H259 contacts Zn(2+). Residue E260 is part of the active site. Residues H263 and H269 each contribute to the Zn(2+) site. Residues 300–370 (QQLYGTPDGQ…RPDQYGPNIC (71 aa)) are disordered. Residues 305–322 (TPDGQPQPTQPLPTVTPR) show a composition bias toward low complexity. The span at 333 to 342 (RPPQPPPPGG) shows a compositional bias: pro residues. 4 Hemopexin repeats span residues 367 to 415 (PNIC…WRGL), 416 to 461 (PGDI…GLGI), 463 to 511 (YDRI…QGIP), and 512 to 559 (ASPK…FMGC). A disulfide bridge connects residues C370 and C559. Residues 574-593 (RPPFNPHGGAEPGADSAEGD) form a disordered region. S589 carries the phosphoserine modification. The helical transmembrane segment at 626 to 646 (VVMVLVPLLLLLCVLGLTYAL) threads the bilayer. At 647 to 669 (VQMQRKGAPRVLLYCKRSLQEWV) the chain is on the cytoplasmic side.

It belongs to the peptidase M10A family. The cofactor is Zn(2+). Requires Ca(2+) as cofactor. Post-translationally, the precursor is cleaved by a furin endopeptidase. In terms of tissue distribution, appeared to be synthesized preferentially in liver, placenta, testis, colon and intestine. Substantial amounts are also detected in pancreas, kidney, lung, heart and skeletal muscle.

It localises to the membrane. Functionally, endopeptidase that degrades various components of the extracellular matrix. May activate progelatinase A. The protein is Matrix metalloproteinase-15 (MMP15) of Homo sapiens (Human).